A 205-amino-acid polypeptide reads, in one-letter code: Holliday junction branch migration complex subunit RuvA (205 aa).

Residues 1–64 form a domain I region; sequence MIGRLRGTLA…EDAHLLYGFA (64 aa). The domain II stretch occupies residues 65–143; that stretch reads EKRERELFRE…AWETSPAMFT (79 aa). A flexible linker region spans residues 144-154; it reads LVSDGPLPVAS. The domain III stretch occupies residues 154–205; sequence SESSAEADAVSALVSLGYKPQEASKAIAAIKDKAGLSSEELIRRSLKGMISK.

This sequence belongs to the RuvA family. In terms of assembly, homotetramer. Forms an RuvA(8)-RuvB(12)-Holliday junction (HJ) complex. HJ DNA is sandwiched between 2 RuvA tetramers; dsDNA enters through RuvA and exits via RuvB. An RuvB hexamer assembles on each DNA strand where it exits the tetramer. Each RuvB hexamer is contacted by two RuvA subunits (via domain III) on 2 adjacent RuvB subunits; this complex drives branch migration. In the full resolvosome a probable DNA-RuvA(4)-RuvB(12)-RuvC(2) complex forms which resolves the HJ.

It localises to the cytoplasm. Its function is as follows. The RuvA-RuvB-RuvC complex processes Holliday junction (HJ) DNA during genetic recombination and DNA repair, while the RuvA-RuvB complex plays an important role in the rescue of blocked DNA replication forks via replication fork reversal (RFR). RuvA specifically binds to HJ cruciform DNA, conferring on it an open structure. The RuvB hexamer acts as an ATP-dependent pump, pulling dsDNA into and through the RuvAB complex. HJ branch migration allows RuvC to scan DNA until it finds its consensus sequence, where it cleaves and resolves the cruciform DNA. The chain is Holliday junction branch migration complex subunit RuvA from Pseudomonas putida (strain ATCC 47054 / DSM 6125 / CFBP 8728 / NCIMB 11950 / KT2440).